The primary structure comprises 203 residues: ATP-dependent Clp protease proteolytic subunit 2 (203 aa).

S97 functions as the Nucleophile in the catalytic mechanism. H122 is a catalytic residue.

Belongs to the peptidase S14 family. Fourteen ClpP subunits assemble into 2 heptameric rings which stack back to back to give a disk-like structure with a central cavity, resembling the structure of eukaryotic proteasomes.

The protein localises to the cytoplasm. The enzyme catalyses Hydrolysis of proteins to small peptides in the presence of ATP and magnesium. alpha-casein is the usual test substrate. In the absence of ATP, only oligopeptides shorter than five residues are hydrolyzed (such as succinyl-Leu-Tyr-|-NHMec, and Leu-Tyr-Leu-|-Tyr-Trp, in which cleavage of the -Tyr-|-Leu- and -Tyr-|-Trp bonds also occurs).. Cleaves peptides in various proteins in a process that requires ATP hydrolysis. Has a chymotrypsin-like activity. Plays a major role in the degradation of misfolded proteins. This chain is ATP-dependent Clp protease proteolytic subunit 2, found in Myxococcus xanthus (strain DK1622).